We begin with the raw amino-acid sequence, 156 residues long: Small ribosomal subunit protein uS7 (156 aa).

The protein belongs to the universal ribosomal protein uS7 family. Part of the 30S ribosomal subunit. Contacts proteins S9 and S11.

One of the primary rRNA binding proteins, it binds directly to 16S rRNA where it nucleates assembly of the head domain of the 30S subunit. Is located at the subunit interface close to the decoding center, probably blocks exit of the E-site tRNA. This chain is Small ribosomal subunit protein uS7, found in Herminiimonas arsenicoxydans.